Here is a 349-residue protein sequence, read N- to C-terminus: D-alanine--D-alanine ligase (349 aa).

The region spanning 132–335 (KHVFEAVGVP…YSDLIEKLVD (204 aa)) is the ATP-grasp domain. Residue 162–217 (VEKLEFPVFVKPANMGSSVGISKVDDLADLQPALSEAYKYDNRVVIEQGVDAREIE) participates in ATP binding. Residues Asp289, Glu302, and Asn304 each coordinate Mg(2+).

Belongs to the D-alanine--D-alanine ligase family. It depends on Mg(2+) as a cofactor. Mn(2+) serves as cofactor.

The protein resides in the cytoplasm. It catalyses the reaction 2 D-alanine + ATP = D-alanyl-D-alanine + ADP + phosphate + H(+). Its pathway is cell wall biogenesis; peptidoglycan biosynthesis. Cell wall formation. This is D-alanine--D-alanine ligase from Lactococcus lactis subsp. cremoris (strain SK11).